The sequence spans 403 residues: 8-amino-7-oxononanoate synthase (403 aa).

Position 30 (arginine 30) interacts with substrate. Position 121-122 (121-122) interacts with pyridoxal 5'-phosphate; the sequence is GY. Histidine 146 contacts substrate. Residues serine 192, histidine 220, and threonine 248 each coordinate pyridoxal 5'-phosphate. Lysine 251 is modified (N6-(pyridoxal phosphate)lysine). A substrate-binding site is contributed by threonine 367.

This sequence belongs to the class-II pyridoxal-phosphate-dependent aminotransferase family. BioF subfamily. In terms of assembly, homodimer. It depends on pyridoxal 5'-phosphate as a cofactor.

The enzyme catalyses 6-carboxyhexanoyl-[ACP] + L-alanine + H(+) = (8S)-8-amino-7-oxononanoate + holo-[ACP] + CO2. The protein operates within cofactor biosynthesis; biotin biosynthesis. Its function is as follows. Catalyzes the decarboxylative condensation of pimeloyl-[acyl-carrier protein] and L-alanine to produce 8-amino-7-oxononanoate (AON), [acyl-carrier protein], and carbon dioxide. The sequence is that of 8-amino-7-oxononanoate synthase from Burkholderia vietnamiensis (strain G4 / LMG 22486) (Burkholderia cepacia (strain R1808)).